We begin with the raw amino-acid sequence, 125 residues long: Small ribosomal subunit protein uS12 (125 aa).

Position 89 is a 3-methylthioaspartic acid (Asp-89).

It belongs to the universal ribosomal protein uS12 family. As to quaternary structure, part of the 30S ribosomal subunit. Contacts proteins S8 and S17. May interact with IF1 in the 30S initiation complex.

With S4 and S5 plays an important role in translational accuracy. Functionally, interacts with and stabilizes bases of the 16S rRNA that are involved in tRNA selection in the A site and with the mRNA backbone. Located at the interface of the 30S and 50S subunits, it traverses the body of the 30S subunit contacting proteins on the other side and probably holding the rRNA structure together. The combined cluster of proteins S8, S12 and S17 appears to hold together the shoulder and platform of the 30S subunit. In Clostridium acetobutylicum (strain ATCC 824 / DSM 792 / JCM 1419 / IAM 19013 / LMG 5710 / NBRC 13948 / NRRL B-527 / VKM B-1787 / 2291 / W), this protein is Small ribosomal subunit protein uS12.